The chain runs to 129 residues: Small ribosomal subunit protein uS11 (129 aa).

It belongs to the universal ribosomal protein uS11 family. Part of the 30S ribosomal subunit. Interacts with proteins S7 and S18. Binds to IF-3.

In terms of biological role, located on the platform of the 30S subunit, it bridges several disparate RNA helices of the 16S rRNA. Forms part of the Shine-Dalgarno cleft in the 70S ribosome. The sequence is that of Small ribosomal subunit protein uS11 from Caulobacter vibrioides (strain ATCC 19089 / CIP 103742 / CB 15) (Caulobacter crescentus).